Here is a 339-residue protein sequence, read N- to C-terminus: tRNA (guanine-N(7)-)-methyltransferase (339 aa).

Residues 1–20 (MTPPPAKRQKRNEYRKANTA) are disordered. Residues Gly94 and 117–118 (EI) each bind S-adenosyl-L-methionine. Residues 141 to 186 (RSSAIPSESSPAAQQPQQHHQQQLQATETAADAASPSSPDATGETL) form a disordered region. Positions 142–181 (SSAIPSESSPAAQQPQQHHQQQLQATETAADAASPSSPDA) are enriched in low complexity. Residues 202–203 (NT) and Cys222 contribute to the S-adenosyl-L-methionine site. Asp225 is an active-site residue. Residue 311 to 313 (TEE) coordinates S-adenosyl-L-methionine.

The protein belongs to the class I-like SAM-binding methyltransferase superfamily. TrmB family. As to quaternary structure, forms a complex with trm82.

The protein resides in the nucleus. The enzyme catalyses guanosine(46) in tRNA + S-adenosyl-L-methionine = N(7)-methylguanosine(46) in tRNA + S-adenosyl-L-homocysteine. It participates in tRNA modification; N(7)-methylguanine-tRNA biosynthesis. In terms of biological role, catalyzes the formation of N(7)-methylguanine at position 46 (m7G46) in tRNA. The protein is tRNA (guanine-N(7)-)-methyltransferase (trm8) of Aspergillus clavatus (strain ATCC 1007 / CBS 513.65 / DSM 816 / NCTC 3887 / NRRL 1 / QM 1276 / 107).